A 239-amino-acid polypeptide reads, in one-letter code: Geranylgeranylglyceryl phosphate synthase (239 aa).

Residues Asp19 and Ser48 each coordinate Mg(2+). Sn-glycerol 1-phosphate-binding positions include 167 to 173 (YLEAGSG), 197 to 198 (GG), and 219 to 220 (GT).

Belongs to the GGGP/HepGP synthase family. Group II subfamily. It depends on Mg(2+) as a cofactor.

It is found in the cytoplasm. It carries out the reaction sn-glycerol 1-phosphate + (2E,6E,10E)-geranylgeranyl diphosphate = sn-3-O-(geranylgeranyl)glycerol 1-phosphate + diphosphate. It functions in the pathway membrane lipid metabolism; glycerophospholipid metabolism. In terms of biological role, prenyltransferase that catalyzes the transfer of the geranylgeranyl moiety of geranylgeranyl diphosphate (GGPP) to the C3 hydroxyl of sn-glycerol-1-phosphate (G1P). This reaction is the first ether-bond-formation step in the biosynthesis of archaeal membrane lipids. This Methanopyrus kandleri (strain AV19 / DSM 6324 / JCM 9639 / NBRC 100938) protein is Geranylgeranylglyceryl phosphate synthase.